The primary structure comprises 549 residues: Fumarate hydratase 1, mitochondrial (549 aa).

Cysteine 114 serves as a coordination point for [4Fe-4S] cluster. Residues 115 to 116 (QD), arginine 154, glycine 197, and 200 to 206 (NKSFLLQ) each bind (S)-malate. Residues cysteine 233 and cysteine 328 each coordinate [4Fe-4S] cluster. Residues arginine 404, 450 to 454 (TTAGR), and lysine 474 contribute to the (S)-malate site.

Belongs to the class-I fumarase family. As to quaternary structure, homodimer. The cofactor is [4Fe-4S] cluster.

It is found in the mitochondrion. It catalyses the reaction (S)-malate = fumarate + H2O. It functions in the pathway carbohydrate metabolism; tricarboxylic acid cycle; (S)-malate from fumarate: step 1/1. Specifically and competitively inhibited by 2-thiomalate, which coordinates with the catalytic [4Fe-4S] cluster. Its function is as follows. Catalyzes the reversible hydration of fumarate to (S)-malate. Catalyzes the hydration of fumarate to L-malate in the tricarboxylic acid (TCA) cycle to facilitate a transition step in the production of energy in the form of NADH. The polypeptide is Fumarate hydratase 1, mitochondrial (Leishmania major).